A 325-amino-acid chain; its full sequence is L-lactate dehydrogenase (325 aa).

NAD(+)-binding positions include valine 19, aspartate 40, lysine 45, tyrosine 70, and 84-85; that span reads GA. Substrate is bound by residues glutamine 87 and arginine 93. Residues threonine 106, 123–125, and serine 148 contribute to the NAD(+) site; that span reads AAN. Residue 125–128 coordinates substrate; it reads NPVD. 153–156 serves as a coordination point for substrate; that stretch reads DSAR. Residues arginine 158 and histidine 173 each coordinate beta-D-fructose 1,6-bisphosphate. Catalysis depends on histidine 180, which acts as the Proton acceptor. Tyrosine 225 carries the phosphotyrosine modification. Threonine 234 is a substrate binding site.

It belongs to the LDH/MDH superfamily. LDH family. Homotetramer.

It localises to the cytoplasm. It carries out the reaction (S)-lactate + NAD(+) = pyruvate + NADH + H(+). Its pathway is fermentation; pyruvate fermentation to lactate; (S)-lactate from pyruvate: step 1/1. Allosterically activated by fructose 1,6-bisphosphate (FBP). Its function is as follows. Catalyzes the conversion of lactate to pyruvate. In Latilactobacillus sakei subsp. sakei (strain 23K) (Lactobacillus sakei subsp. sakei), this protein is L-lactate dehydrogenase.